The chain runs to 192 residues: MAVKEILRMGNPQLRKVSNVVDDASDELIISLIKDLQDTVKAHQGAGLAAPQIGVPLRVVLFGGGGPNPRYPEAPSIPQTLLINPVLTPIGSDLEDGWEGCLSVPGLRGKVSRWSRIHYRALNEDGFEVEHCLEGFPARVIQHECDHLDGVLFPDRLVDSASFGFTGELETAGIIEKLSSAEQKASQQSRAD.

Residues Cys-101 and His-143 each coordinate Fe cation. Glu-144 is an active-site residue. His-147 is a Fe cation binding site.

This sequence belongs to the polypeptide deformylase family. It depends on Fe(2+) as a cofactor.

The catalysed reaction is N-terminal N-formyl-L-methionyl-[peptide] + H2O = N-terminal L-methionyl-[peptide] + formate. In terms of biological role, removes the formyl group from the N-terminal Met of newly synthesized proteins. Requires at least a dipeptide for an efficient rate of reaction. N-terminal L-methionine is a prerequisite for activity but the enzyme has broad specificity at other positions. This Prochlorococcus marinus (strain MIT 9313) protein is Peptide deformylase 1.